Consider the following 297-residue polypeptide: 4-diphosphocytidyl-2-C-methyl-D-erythritol kinase (297 aa).

Active-site residues include K6 and D144.

This sequence belongs to the GHMP kinase family. IspE subfamily.

It catalyses the reaction 4-CDP-2-C-methyl-D-erythritol + ATP = 4-CDP-2-C-methyl-D-erythritol 2-phosphate + ADP + H(+). It functions in the pathway isoprenoid biosynthesis; isopentenyl diphosphate biosynthesis via DXP pathway; isopentenyl diphosphate from 1-deoxy-D-xylulose 5-phosphate: step 3/6. Its function is as follows. Catalyzes the phosphorylation of the position 2 hydroxy group of 4-diphosphocytidyl-2C-methyl-D-erythritol. This Leptospira interrogans serogroup Icterohaemorrhagiae serovar copenhageni (strain Fiocruz L1-130) protein is 4-diphosphocytidyl-2-C-methyl-D-erythritol kinase.